Reading from the N-terminus, the 391-residue chain is Tryptophan synthase beta chain (391 aa).

Residue K84 is modified to N6-(pyridoxal phosphate)lysine.

It belongs to the TrpB family. In terms of assembly, tetramer of two alpha and two beta chains. Pyridoxal 5'-phosphate serves as cofactor.

It carries out the reaction (1S,2R)-1-C-(indol-3-yl)glycerol 3-phosphate + L-serine = D-glyceraldehyde 3-phosphate + L-tryptophan + H2O. It participates in amino-acid biosynthesis; L-tryptophan biosynthesis; L-tryptophan from chorismate: step 5/5. Its function is as follows. The beta subunit is responsible for the synthesis of L-tryptophan from indole and L-serine. The sequence is that of Tryptophan synthase beta chain from Thermoanaerobacter pseudethanolicus (strain ATCC 33223 / 39E) (Clostridium thermohydrosulfuricum).